The following is a 223-amino-acid chain: Small ribosomal subunit protein uS3 (223 aa).

Positions L38 to H106 constitute a KH type-2 domain.

It belongs to the universal ribosomal protein uS3 family. Part of the 30S ribosomal subunit. Forms a tight complex with proteins S10 and S14.

Binds the lower part of the 30S subunit head. Binds mRNA in the 70S ribosome, positioning it for translation. The polypeptide is Small ribosomal subunit protein uS3 (Koribacter versatilis (strain Ellin345)).